Consider the following 309-residue polypeptide: MEPRKNVTDFVLLGFTQNPKEQKVLFVMFLLFYILTMVGNLLIVVTVTVSETLGSPMYFFLAGLSFIDIIYSSSISPRLISGLFFGNNSISFQSCMAQLFIEHIFGGSEVFLLLVMAYDCYVAICKPLHYLVIMRQWVCVVLLVVSWVGGFLHSVFQLSIIYGLPFCGPNVIDHFFCDMYPLLKLVCTDTHAIGLLVVANGGLACTIVFLLLLISYGVILHSLKNLSQKGRQKALSTCSSHMTVVVFFFVPCIFMYARPARTFPIDKSVSVFYTVITPMLNPLIYTLRNSEMTSAMKKLWRRDLISSST.

Residues 1–23 (MEPRKNVTDFVLLGFTQNPKEQK) lie on the Extracellular side of the membrane. A glycan (N-linked (GlcNAc...) asparagine) is linked at asparagine 6. A helical membrane pass occupies residues 24-47 (VLFVMFLLFYILTMVGNLLIVVTV). Topologically, residues 48 to 55 (TVSETLGS) are cytoplasmic. The helical transmembrane segment at 56-77 (PMYFFLAGLSFIDIIYSSSISP) threads the bilayer. At 78 to 98 (RLISGLFFGNNSISFQSCMAQ) the chain is on the extracellular side. The N-linked (GlcNAc...) asparagine glycan is linked to asparagine 87. A disulfide bond links cysteine 95 and cysteine 187. The helical transmembrane segment at 99 to 118 (LFIEHIFGGSEVFLLLVMAY) threads the bilayer. Residues 119–137 (DCYVAICKPLHYLVIMRQW) are Cytoplasmic-facing. Residues 138–156 (VCVVLLVVSWVGGFLHSVF) form a helical membrane-spanning segment. Topologically, residues 157-193 (QLSIIYGLPFCGPNVIDHFFCDMYPLLKLVCTDTHAI) are extracellular. Residues 194–217 (GLLVVANGGLACTIVFLLLLISYG) form a helical membrane-spanning segment. At 218 to 233 (VILHSLKNLSQKGRQK) the chain is on the cytoplasmic side. A helical membrane pass occupies residues 234 to 256 (ALSTCSSHMTVVVFFFVPCIFMY). Residues 257–267 (ARPARTFPIDK) lie on the Extracellular side of the membrane. Residues 268-287 (SVSVFYTVITPMLNPLIYTL) traverse the membrane as a helical segment. The Cytoplasmic portion of the chain corresponds to 288–309 (RNSEMTSAMKKLWRRDLISSST).

It belongs to the G-protein coupled receptor 1 family.

It is found in the cell membrane. Its function is as follows. Odorant receptor. The polypeptide is Olfactory receptor 4A47 (OR4A47) (Homo sapiens (Human)).